Consider the following 880-residue polypeptide: Protein translocase subunit SecA (880 aa).

ATP is bound by residues Gln86, 104 to 108, and Asp511; that span reads GEGKT. The segment at 837–871 is disordered; it reads AQKIQRSDGDGARRPVEKPKKIGRNDPCPCGSGKK. Positions 841–860 are enriched in basic and acidic residues; that stretch reads QRSDGDGARRPVEKPKKIGR. Residues Cys864, Cys866, Cys875, and Cys876 each coordinate Zn(2+).

The protein belongs to the SecA family. Monomer and homodimer. Part of the essential Sec protein translocation apparatus which comprises SecA, SecYEG and auxiliary proteins SecDF. Other proteins may also be involved. Zn(2+) is required as a cofactor.

It is found in the cell inner membrane. Its subcellular location is the cytoplasm. The enzyme catalyses ATP + H2O + cellular proteinSide 1 = ADP + phosphate + cellular proteinSide 2.. Its function is as follows. Part of the Sec protein translocase complex. Interacts with the SecYEG preprotein conducting channel. Has a central role in coupling the hydrolysis of ATP to the transfer of proteins into and across the cell membrane, serving as an ATP-driven molecular motor driving the stepwise translocation of polypeptide chains across the membrane. The chain is Protein translocase subunit SecA from Thermodesulfovibrio yellowstonii (strain ATCC 51303 / DSM 11347 / YP87).